Here is a 308-residue protein sequence, read N- to C-terminus: Ribosomal protein L11 methyltransferase (308 aa).

Residues Thr157, Gly178, Asp200, and Asn243 each coordinate S-adenosyl-L-methionine.

Belongs to the methyltransferase superfamily. PrmA family.

It localises to the cytoplasm. It catalyses the reaction L-lysyl-[protein] + 3 S-adenosyl-L-methionine = N(6),N(6),N(6)-trimethyl-L-lysyl-[protein] + 3 S-adenosyl-L-homocysteine + 3 H(+). Functionally, methylates ribosomal protein L11. The sequence is that of Ribosomal protein L11 methyltransferase from Pelotomaculum thermopropionicum (strain DSM 13744 / JCM 10971 / SI).